The primary structure comprises 610 residues: Glutamine--fructose-6-phosphate aminotransferase [isomerizing] (610 aa).

C2 functions as the Nucleophile; for GATase activity in the catalytic mechanism. Residues 2–218 (CGIVGAVAQR…EGDVAEITRR (217 aa)) enclose the Glutamine amidotransferase type-2 domain. SIS domains are found at residues 286 to 426 (AVEI…QQNR) and 459 to 600 (LAPD…VDQP). K605 (for Fru-6P isomerization activity) is an active-site residue.

As to quaternary structure, homodimer.

Its subcellular location is the cytoplasm. It carries out the reaction D-fructose 6-phosphate + L-glutamine = D-glucosamine 6-phosphate + L-glutamate. In terms of biological role, catalyzes the first step in hexosamine metabolism, converting fructose-6P into glucosamine-6P using glutamine as a nitrogen source. This Aliivibrio fischeri (strain ATCC 700601 / ES114) (Vibrio fischeri) protein is Glutamine--fructose-6-phosphate aminotransferase [isomerizing].